The primary structure comprises 448 residues: uncharacterized protein (448 aa).

K297 carries the N6-(pyridoxal phosphate)lysine modification.

This sequence belongs to the class-III pyridoxal-phosphate-dependent aminotransferase family. The cofactor is pyridoxal 5'-phosphate.

This is an uncharacterized protein from Sinorhizobium fredii (strain NBRC 101917 / NGR234).